A 304-amino-acid polypeptide reads, in one-letter code: Light-independent protochlorophyllide reductase iron-sulfur ATP-binding protein (304 aa).

ATP is bound by residues 46-51 (GIGKST) and lysine 75. Residue serine 50 participates in Mg(2+) binding. 2 residues coordinate [4Fe-4S] cluster: cysteine 131 and cysteine 165. ATP is bound by residues 216-217 (NR) and 240-242 (PDL).

The protein belongs to the NifH/BchL/ChlL family. Homodimer. Protochlorophyllide reductase is composed of three subunits; BchL, BchN and BchB. [4Fe-4S] cluster serves as cofactor.

The enzyme catalyses chlorophyllide a + oxidized 2[4Fe-4S]-[ferredoxin] + 2 ADP + 2 phosphate = protochlorophyllide a + reduced 2[4Fe-4S]-[ferredoxin] + 2 ATP + 2 H2O. Its pathway is porphyrin-containing compound metabolism; bacteriochlorophyll biosynthesis (light-independent). Component of the dark-operative protochlorophyllide reductase (DPOR) that uses Mg-ATP and reduced ferredoxin to reduce ring D of protochlorophyllide (Pchlide) to form chlorophyllide a (Chlide). This reaction is light-independent. The L component serves as a unique electron donor to the NB-component of the complex, and binds Mg-ATP. In Rhodobacter capsulatus (strain ATCC BAA-309 / NBRC 16581 / SB1003), this protein is Light-independent protochlorophyllide reductase iron-sulfur ATP-binding protein.